A 391-amino-acid chain; its full sequence is Pectin acetylesterase 11 (391 aa).

Residues 1 to 23 (MTWLKQMWSSILVLAVVVIGARA) form the signal peptide. Active-site charge relay system residues include Ser171, Asp267, and His334.

The protein belongs to the pectinacetylesterase family.

Its subcellular location is the secreted. It is found in the cell wall. Its function is as follows. Hydrolyzes acetyl esters in homogalacturonan regions of pectin. In type I primary cell wall, galacturonic acid residues of pectin can be acetylated at the O-2 and O-3 positions. Decreasing the degree of acetylation of pectin gels in vitro alters their physical properties. This Arabidopsis thaliana (Mouse-ear cress) protein is Pectin acetylesterase 11.